The sequence spans 508 residues: Maturase K (508 aa).

Belongs to the intron maturase 2 family. MatK subfamily.

The protein localises to the plastid. It localises to the chloroplast. Usually encoded in the trnK tRNA gene intron. Probably assists in splicing its own and other chloroplast group II introns. The chain is Maturase K from Gordonia lasianthus (Loblolly bay).